Reading from the N-terminus, the 342-residue chain is Holliday junction branch migration complex subunit RuvB (342 aa).

Residues 1 to 181 (MENRMVTPFD…FGMLCAMEFY (181 aa)) form a large ATPase domain (RuvB-L) region. Residues Leu-20, Arg-21, Gly-62, Lys-65, Thr-66, Thr-67, 128 to 130 (EDY), Arg-171, Tyr-181, and Arg-218 each bind ATP. Thr-66 is a Mg(2+) binding site. The interval 182 to 252 (TDEELMEIVV…GAKAALDLLE (71 aa)) is small ATPAse domain (RuvB-S). Residues 255 to 342 (KEGLDKIDNK…KDNQVSIFNK (88 aa)) form a head domain (RuvB-H) region. DNA is bound by residues Arg-310 and Arg-315.

The protein belongs to the RuvB family. In terms of assembly, homohexamer. Forms an RuvA(8)-RuvB(12)-Holliday junction (HJ) complex. HJ DNA is sandwiched between 2 RuvA tetramers; dsDNA enters through RuvA and exits via RuvB. An RuvB hexamer assembles on each DNA strand where it exits the tetramer. Each RuvB hexamer is contacted by two RuvA subunits (via domain III) on 2 adjacent RuvB subunits; this complex drives branch migration. In the full resolvosome a probable DNA-RuvA(4)-RuvB(12)-RuvC(2) complex forms which resolves the HJ.

The protein localises to the cytoplasm. The catalysed reaction is ATP + H2O = ADP + phosphate + H(+). In terms of biological role, the RuvA-RuvB-RuvC complex processes Holliday junction (HJ) DNA during genetic recombination and DNA repair, while the RuvA-RuvB complex plays an important role in the rescue of blocked DNA replication forks via replication fork reversal (RFR). RuvA specifically binds to HJ cruciform DNA, conferring on it an open structure. The RuvB hexamer acts as an ATP-dependent pump, pulling dsDNA into and through the RuvAB complex. RuvB forms 2 homohexamers on either side of HJ DNA bound by 1 or 2 RuvA tetramers; 4 subunits per hexamer contact DNA at a time. Coordinated motions by a converter formed by DNA-disengaged RuvB subunits stimulates ATP hydrolysis and nucleotide exchange. Immobilization of the converter enables RuvB to convert the ATP-contained energy into a lever motion, pulling 2 nucleotides of DNA out of the RuvA tetramer per ATP hydrolyzed, thus driving DNA branch migration. The RuvB motors rotate together with the DNA substrate, which together with the progressing nucleotide cycle form the mechanistic basis for DNA recombination by continuous HJ branch migration. Branch migration allows RuvC to scan DNA until it finds its consensus sequence, where it cleaves and resolves cruciform DNA. The polypeptide is Holliday junction branch migration complex subunit RuvB (Clostridium botulinum (strain Loch Maree / Type A3)).